The following is an 87-amino-acid chain: MKTKLNELLEFPCPFTYKVMGIAEPQLVNQVVEVVQRHAPGDYTPEVKPSSKGNYHSVSITITATHIDQVETLYEELGNLELVRMVL.

It belongs to the UPF0250 family.

This chain is UPF0250 protein YE3006, found in Yersinia enterocolitica serotype O:8 / biotype 1B (strain NCTC 13174 / 8081).